The chain runs to 412 residues: Serine hydroxymethyltransferase (412 aa).

(6S)-5,6,7,8-tetrahydrofolate is bound by residues Leu-117 and Gly-121 to Leu-123. Lys-226 is subject to N6-(pyridoxal phosphate)lysine. Residue Glu-241 participates in (6S)-5,6,7,8-tetrahydrofolate binding.

Belongs to the SHMT family. As to quaternary structure, homodimer. Requires pyridoxal 5'-phosphate as cofactor.

Its subcellular location is the cytoplasm. The catalysed reaction is (6R)-5,10-methylene-5,6,7,8-tetrahydrofolate + glycine + H2O = (6S)-5,6,7,8-tetrahydrofolate + L-serine. It participates in one-carbon metabolism; tetrahydrofolate interconversion. It functions in the pathway amino-acid biosynthesis; glycine biosynthesis; glycine from L-serine: step 1/1. Functionally, catalyzes the reversible interconversion of serine and glycine with tetrahydrofolate (THF) serving as the one-carbon carrier. This reaction serves as the major source of one-carbon groups required for the biosynthesis of purines, thymidylate, methionine, and other important biomolecules. Also exhibits THF-independent aldolase activity toward beta-hydroxyamino acids, producing glycine and aldehydes, via a retro-aldol mechanism. The polypeptide is Serine hydroxymethyltransferase (Staphylococcus carnosus (strain TM300)).